The sequence spans 92 residues: Small ribosomal subunit protein uS19 (92 aa).

This sequence belongs to the universal ribosomal protein uS19 family.

Its function is as follows. Protein S19 forms a complex with S13 that binds strongly to the 16S ribosomal RNA. In Bacillus mycoides (strain KBAB4) (Bacillus weihenstephanensis), this protein is Small ribosomal subunit protein uS19.